The primary structure comprises 165 residues: Disulfide bond formation protein B (165 aa).

The Cytoplasmic portion of the chain corresponds to 1 to 16 (MTILNSLNQFSKGRLS). Residues 17–33 (WLLLLLFVVFFEACALY) traverse the membrane as a helical segment. Over 34–51 (FQHVMMLAPCVMCIYERV) the chain is Periplasmic. An intrachain disulfide couples C43 to C46. Residues 52–67 (AMMGVGVAAIVGLMAP) traverse the membrane as a helical segment. Over 68 to 74 (NNPIFRW) the chain is Cytoplasmic. Residues 75–92 (LGLIGWGLSSYKGLLLAQ) traverse the membrane as a helical segment. The Periplasmic segment spans residues 93 to 147 (QHVDYQFNPSPFATCDLFVTFPSWRPLNQWAPWIFEAYGDCSKIVWQFLDLSMPQ). An intrachain disulfide couples C107 to C133. Residues 148-165 (WLVVIFAGNLIALALIVI) traverse the membrane as a helical segment.

It belongs to the DsbB family.

Its subcellular location is the cell inner membrane. Its function is as follows. Required for disulfide bond formation in some periplasmic proteins. Acts by oxidizing the DsbA protein. The chain is Disulfide bond formation protein B from Vibrio alginolyticus.